Reading from the N-terminus, the 283-residue chain is Homeobox-leucine zipper protein HAT2 (283 aa).

A disordered region spans residues 64–134 (VNCEEDTGVS…GETSRKKLRL (71 aa)). Over residues 73-84 (SSPNSTISSTIS) the composition is skewed to low complexity. A DNA-binding region (homeobox) is located at residues 127–186 (TSRKKLRLSKDQSAFLEETFKEHNTLNPKQKLALAKKLNLTARQVEVWFQNRRARTKLKQ). The leucine-zipper stretch occupies residues 194–215 (LKRCVEKLTEENRRLQKEAMEL).

It belongs to the HD-ZIP homeobox family. Class II subfamily. In terms of assembly, interacts with RBR1.

The protein resides in the nucleus. Probable transcription factor that plays a role in auxin-mediated morphogenesis. Negatively regulates lateral root elongation. The protein is Homeobox-leucine zipper protein HAT2 (HAT2) of Arabidopsis thaliana (Mouse-ear cress).